The following is a 478-amino-acid chain: Stromelysin-1 (478 aa).

An N-terminal signal peptide occupies residues 1–17; that stretch reads MKTLPTLLLLCVALCSA. The propeptide at 18–100 is activation peptide; the sequence is YPLDGASRDA…PRCGVPDVGH (83 aa). The Cysteine switch motif lies at 91-98; the sequence is PRCGVPDV. Cysteine 93 provides a ligand contact to Zn(2+). Positions 125 and 159 each coordinate Ca(2+). Zn(2+) contacts are provided by histidine 169 and aspartate 171. Positions 176, 177, 179, and 181 each coordinate Ca(2+). Position 184 (histidine 184) interacts with Zn(2+). Ca(2+) is bound by residues glycine 191, asparagine 193, and aspartate 195. Zn(2+) is bound at residue histidine 197. Ca(2+)-binding residues include aspartate 199, aspartate 200, and glutamate 202. Zn(2+) is bound at residue histidine 219. Residue glutamate 220 is part of the active site. Histidine 223 and histidine 229 together coordinate Zn(2+). 4 Hemopexin repeats span residues 288–337, 338–384, 386–434, and 435–478; these read PVMC…WPSL, PSAV…GFPS, IRKI…FPGI, and NPKI…WFQC. Cysteine 291 and cysteine 478 are joined by a disulfide. Residue aspartate 298 coordinates Ca(2+). Residues aspartate 390 and aspartate 439 each coordinate Ca(2+).

This sequence belongs to the peptidase M10A family. Ca(2+) is required as a cofactor. Zn(2+) serves as cofactor.

The protein resides in the secreted. Its subcellular location is the extracellular space. It localises to the extracellular matrix. It catalyses the reaction Preferential cleavage where P1', P2' and P3' are hydrophobic residues.. Its function is as follows. Metalloproteinase with a rather broad substrate specificity that can degrade fibronectin, laminin, gelatins of type I, III, IV, and V; collagens III, IV, X, and IX, and cartilage proteoglycans. Activates different molecules including growth factors, plasminogen or other matrix metalloproteinases such as MMP9. Once released into the extracellular matrix (ECM), the inactive pro-enzyme is activated by the plasmin cascade signaling pathway. Also acts intracellularly. For example, in dopaminergic neurons, gets activated by the serine protease HTRA2 upon stress and plays a pivotal role in DA neuronal degeneration by mediating microglial activation and alpha-synuclein/SNCA cleavage. In addition, plays a role in immune response and possesses antiviral activity against various viruses. Mechanistically, translocates from the cytoplasm into the cell nucleus upon virus infection to influence NF-kappa-B activities. The protein is Stromelysin-1 (MMP3) of Oryctolagus cuniculus (Rabbit).